The chain runs to 508 residues: GATA zinc finger domain-containing protein 13 (508 aa).

Disordered stretches follow at residues 20–51 (YSKNNNNNNNNNNNNNINNNNNNNNNNNINNN) and 203–296 (MSII…PEIE). Low complexity predominate over residues 23 to 51 (NNNNNNNNNNNNNINNNNNNNNNNNINNN). Positions 203 to 224 (MSIIPSDNFPTPQLPLETNTDL) are enriched in polar residues. The segment covering 225–247 (NNTSDCSSTTFSSPPSSAFNSPN) has biased composition (low complexity). Residues 248–266 (LQNDYTQPQNQKSQSSTIV) are compositionally biased toward polar residues. A compositionally biased stretch (basic residues) spans 269–279 (NSSKSKSKNNK). The GATA-type zinc-finger motif lies at 327–354 (CSICKIKCSIYWRRILINEVRTSVCNAC). Residues 356–433 (LRTMKKTKKE…NNNNNNNNNN (78 aa)) are a coiled coil. Residues 399–482 (TTTTTTTTTS…NNNNNDNYND (84 aa)) show a composition bias toward low complexity. The tract at residues 399–484 (TTTTTTTTTS…NNNDNYNDSI (86 aa)) is disordered.

The chain is GATA zinc finger domain-containing protein 13 (gtaM) from Dictyostelium discoideum (Social amoeba).